The sequence spans 343 residues: Autoinducer 2 import system permease protein LsrC (343 aa).

A run of 9 helical transmembrane segments spans residues 13 to 33 (FLAI…YLSF), 38 to 58 (MIFA…LVML), 61 to 81 (NIDV…GVAL), 92 to 112 (LFAL…VVGL), 114 to 134 (IPAI…MLLW), 154 to 174 (VALG…IGAW), 212 to 232 (INGM…GFVP), 251 to 271 (GISL…AFFL), and 283 to 303 (LPAW…LVLD). The disordered stretch occupies residues 321–343 (RFQPGNKGGKHVTPFPKRKKEVA).

The protein belongs to the binding-protein-dependent transport system permease family. AraH/RbsC subfamily. The complex is composed of two ATP-binding proteins (LsrA), two transmembrane proteins (LsrC and LsrD) and a solute-binding protein (LsrB).

It localises to the cell inner membrane. Its function is as follows. Part of the ABC transporter complex LsrABCD involved in autoinducer 2 (AI-2) import. Probably responsible for the translocation of the substrate across the membrane. This Enterobacter sp. (strain 638) protein is Autoinducer 2 import system permease protein LsrC (lsrC).